The chain runs to 837 residues: Phosphatidylinositol-glycan-specific phospholipase D (837 aa).

A signal peptide spans 1 to 23; the sequence is MSAGRLWSSLLLLLPLFCSKSSS. Asparagine 94, asparagine 267, asparagine 287, asparagine 303, and asparagine 317 each carry an N-linked (GlcNAc...) asparagine glycan. FG-GAP repeat units lie at residues 364 to 425, 431 to 492, 494 to 554, 561 to 619, 629 to 689, 701 to 767, and 785 to 837; these read SPSA…GLPP, NKEG…GRLS, SPNV…RNDK, EADW…SLGK, QSTI…GATR, ALLS…TLGD, and QYVL…FSSD. N-linked (GlcNAc...) asparagine glycosylation is found at asparagine 477, asparagine 496, asparagine 586, asparagine 599, and asparagine 655.

It belongs to the GPLD1 family. As to quaternary structure, monomer. Widely expressed.

It is found in the secreted. The catalysed reaction is a 6-(alpha-D-glucosaminyl)-1-(1,2-diacyl-sn-glycero-3-phospho)-1D-myo-inositol + H2O = 6-(alpha-D-glucosaminyl)-1D-myo-inositol + a 1,2-diacyl-sn-glycero-3-phosphate + H(+). In terms of biological role, this protein hydrolyzes the inositol phosphate linkage in proteins anchored by phosphatidylinositol glycans (GPI-anchor) thus releasing these proteins from the membrane. The sequence is that of Phosphatidylinositol-glycan-specific phospholipase D (Gpld1) from Mus musculus (Mouse).